A 137-amino-acid chain; its full sequence is Nucleoside diphosphate kinase (137 aa).

Lysine 10, phenylalanine 58, arginine 86, threonine 92, arginine 103, and asparagine 113 together coordinate ATP. Histidine 116 functions as the Pros-phosphohistidine intermediate in the catalytic mechanism.

It belongs to the NDK family. As to quaternary structure, homotetramer. Requires Mg(2+) as cofactor.

It is found in the cytoplasm. The catalysed reaction is a 2'-deoxyribonucleoside 5'-diphosphate + ATP = a 2'-deoxyribonucleoside 5'-triphosphate + ADP. It catalyses the reaction a ribonucleoside 5'-diphosphate + ATP = a ribonucleoside 5'-triphosphate + ADP. Major role in the synthesis of nucleoside triphosphates other than ATP. The ATP gamma phosphate is transferred to the NDP beta phosphate via a ping-pong mechanism, using a phosphorylated active-site intermediate. This chain is Nucleoside diphosphate kinase, found in Helicobacter acinonychis (strain Sheeba).